The sequence spans 670 residues: MEGHVEEGSELGEQKVLIDNPADILVIAAYFLLVIGVGLWSMFRTNRGTVGGYFLAGRSMVWWPVGASLFASNIGSGHFVGLAGTGAASGLAVAGFEWNALFVVLLLGWLFVPVYLTAGVITMPQYLRKRFGGRRIRLYLSVLSLFLYIFTKISVDMFSGAVFIQQALGWNIYASVIALLGITMIYTVTGGLAALMYTDTVQTFVILAGAFILTGYAFHEVGGYSGLFDKYLGAVTSLTVSKDPAVGNISSTCYQPRPDSYHLLRDPVTGGLPWPALLLGLTIVSGWHWCSDQVIVQRCLAGKNLTHIKAGCILCGYLKLMPMFLMVMPGMISRILYPDEVACVVPEVCKRVCGTEVGCSNIAYPRLVVKLMPNGLRGLMLAVMLAALMSSLASIFNSSSTLFTMDIYTRLRPRAGDRELLLVGRLWVVFIVAVSVAWLPVVQAAQGGQLFDYIQSVSSYLAPPVSAVFVLALFVPRVNEKGAFWGLIGGLLMGLARLIPEFFFGTGSCVRPSACPAIFCRVHYLYFAIILFFCSGFLTLAISRCTAPIPQKHLHRLVFSLRHSKEEREDLDAEELEGPAPPPVQNGCQECAMGIEEVQSPAPGLLRQCLLWFCGMSKSGSGSPPPTTEEVAATTRRLEDISEDPSWARVVNLNALLMMTVAVFLWGFYA.

The Extracellular segment spans residues 1 to 20 (MEGHVEEGSELGEQKVLIDN). Residues 21 to 42 (PADILVIAAYFLLVIGVGLWSM) form a helical membrane-spanning segment. The Cytoplasmic segment spans residues 43–61 (FRTNRGTVGGYFLAGRSMV). Residues 62–83 (WWPVGASLFASNIGSGHFVGLA) traverse the membrane as a helical segment. Na(+) contacts are provided by Ala-71 and Ile-74. Topologically, residues 84-91 (GTGAASGL) are extracellular. Residues 92-112 (AVAGFEWNALFVVLLLGWLFV) form a helical membrane-spanning segment. At 113–134 (PVYLTAGVITMPQYLRKRFGGR) the chain is on the cytoplasmic side. Residues 135 to 164 (RIRLYLSVLSLFLYIFTKISVDMFSGAVFI) form a helical membrane-spanning segment. The Extracellular portion of the chain corresponds to 165 to 171 (QQALGWN). Transmembrane regions (helical) follow at residues 172 to 193 (IYASVIALLGITMIYTVTGGLA) and 194 to 215 (ALMYTDTVQTFVILAGAFILTG). Topologically, residues 216-273 (YAFHEVGGYSGLFDKYLGAVTSLTVSKDPAVGNISSTCYQPRPDSYHLLRDPVTGGLP) are extracellular. N-linked (GlcNAc...) asparagine glycosylation occurs at Asn-248. Disulfide bonds link Cys-253–Cys-509, Cys-343–Cys-349, Cys-353–Cys-359, and Cys-515–Cys-520. A helical transmembrane segment spans residues 274-293 (WPALLLGLTIVSGWHWCSDQ). The Cytoplasmic portion of the chain corresponds to 294–307 (VIVQRCLAGKNLTH). Residues 308–329 (IKAGCILCGYLKLMPMFLMVMP) form a helical membrane-spanning segment. Residues 330 to 373 (GMISRILYPDEVACVVPEVCKRVCGTEVGCSNIAYPRLVVKLMP) lie on the Extracellular side of the membrane. A helical membrane pass occupies residues 374–404 (NGLRGLMLAVMLAALMSSLASIFNSSSTLFT). The Na(+) site is built by Ala-387, Ser-390, and Ser-391. At 405-422 (MDIYTRLRPRAGDRELLL) the chain is on the cytoplasmic side. The helical transmembrane segment at 423–444 (VGRLWVVFIVAVSVAWLPVVQA) threads the bilayer. The Extracellular segment spans residues 445-449 (AQGGQ). A helical membrane pass occupies residues 450 to 475 (LFDYIQSVSSYLAPPVSAVFVLALFV). The Cytoplasmic portion of the chain corresponds to 476–480 (PRVNE). A helical membrane pass occupies residues 481–503 (KGAFWGLIGGLLMGLARLIPEFF). The Extracellular segment spans residues 504–521 (FGTGSCVRPSACPAIFCR). A helical transmembrane segment spans residues 522-545 (VHYLYFAIILFFCSGFLTLAISRC). Residues 546-649 (TAPIPQKHLH…DISEDPSWAR (104 aa)) lie on the Cytoplasmic side of the membrane. A helical transmembrane segment spans residues 650–668 (VVNLNALLMMTVAVFLWGF). Topologically, residues 669–670 (YA) are extracellular.

This sequence belongs to the sodium:solute symporter (SSF) (TC 2.A.21) family. In terms of assembly, forms a heterodimer (via TM13) with PDZK1IP1 (via N-terminal transmembrane helix); this interaction enhances SLC5A2 transporter activity. Post-translationally, glycosylated at a single site. As to expression, kidney, in proximal tubule S1 segments.

It localises to the apical cell membrane. The catalysed reaction is D-glucose(out) + Na(+)(out) = D-glucose(in) + Na(+)(in). Its activity is regulated as follows. Enhanced by the interaction with PDZK1IP1/MAP17. Electrogenic Na(+)-coupled sugar symporter that actively transports D-glucose at the plasma membrane, with a Na(+) to sugar coupling ratio of 1:1. Transporter activity is driven by a transmembrane Na(+) electrochemical gradient set by the Na(+)/K(+) pump. Unlike SLC5A1/SGLT1, requires the auxiliary protein PDZK1IP1/MAP17 for full transporter activity. Has a primary role in D-glucose reabsorption from glomerular filtrate across the brush border of the early proximal tubules of the kidney. In Rattus norvegicus (Rat), this protein is Sodium/glucose cotransporter 2 (Slc5a2).